We begin with the raw amino-acid sequence, 806 residues long: Leucine--tRNA ligase (806 aa).

The 'HIGH' region signature appears at 40–51; that stretch reads PYPSGSGLHVGH. The short motif at 576 to 580 is the 'KMSKS' region element; sequence KMSKS. Lys-579 provides a ligand contact to ATP.

This sequence belongs to the class-I aminoacyl-tRNA synthetase family.

The protein resides in the cytoplasm. The enzyme catalyses tRNA(Leu) + L-leucine + ATP = L-leucyl-tRNA(Leu) + AMP + diphosphate. This is Leucine--tRNA ligase from Chlorobium phaeobacteroides (strain BS1).